The chain runs to 164 residues: Large ribosomal subunit protein bL9 (164 aa).

This sequence belongs to the bacterial ribosomal protein bL9 family.

Its function is as follows. Binds to the 23S rRNA. This chain is Large ribosomal subunit protein bL9, found in Borrelia recurrentis (strain A1).